A 26-amino-acid chain; its full sequence is M-lycotoxin-Ls2a (26 aa).

As to expression, expressed by the venom gland.

It localises to the secreted. The protein resides in the target cell membrane. Its function is as follows. Forms pore that permeabilize the cell membrane. Promotes efflux of calcium from synaptosomes, causes hemolysis, and dissipates voltage gradients across muscle membrane. Potently inhibits the growth of bacteria and yeast. May function both in the prey capture strategy as well as protection from infectious organisms arising from prey ingestion. The protein is M-lycotoxin-Ls2a of Lycosa singoriensis (Wolf spider).